The primary structure comprises 227 residues: Ubiquitin domain-containing protein 1 (227 aa).

Residues methionine 1–lysine 35 form a disordered region. Positions glycine 24–lysine 35 are enriched in basic and acidic residues. Residues phenylalanine 149–proline 224 form the Ubiquitin-like domain.

Interacts with UBTD1.

In terms of biological role, may be involved in the regulation of cellular senescence through a positive feedback loop with TP53. Is a TP53 downstream target gene that increases the stability of TP53 protein by promoting the ubiquitination and degradation of MDM2. This is Ubiquitin domain-containing protein 1 (UBTD1) from Homo sapiens (Human).